We begin with the raw amino-acid sequence, 318 residues long: MSFSSDTKDELARIYPEEEESKIAELAALIRTIGSISMYGNGKISLTFTTENASVARLVFKLIKDLFGIIPETMVRRGRYLKKTLSYLIFVPDTKIAEEILGKVKILNYEKGHIKLNYGIDQKIVKNSKAKKAYLRGAFLGGGSISDPEKAYHMEFITHNLEHGKDLSKLINSFDLNSKVIARKNNYVVYLKEGEQIVDVLNIMGAHSALLNLENIRVYKEMRNNVNRIVNCETANLTKTINASLRQIESINYIKETVGLDYLPPNLKEVAELRINYPDLSLKELGQMLVPPVGKSGVNHRLRKIEEISKKLKERRVQ.

Residues 281 to 314 constitute a DNA-binding region (H-T-H motif); the sequence is SLKELGQMLVPPVGKSGVNHRLRKIEEISKKLKE.

It belongs to the WhiA family.

Its function is as follows. Involved in cell division and chromosome segregation. This chain is Probable cell division protein WhiA, found in Thermoanaerobacter pseudethanolicus (strain ATCC 33223 / 39E) (Clostridium thermohydrosulfuricum).